A 126-amino-acid polypeptide reads, in one-letter code: Small ribosomal subunit protein uS13 (126 aa).

The segment at 99 to 126 (LRGQSTKNNARTRKGKKKTVANKKKATK) is disordered. Positions 108-126 (ARTRKGKKKTVANKKKATK) are enriched in basic residues.

It belongs to the universal ribosomal protein uS13 family. In terms of assembly, part of the 30S ribosomal subunit. Forms a loose heterodimer with protein S19. Forms two bridges to the 50S subunit in the 70S ribosome.

Its function is as follows. Located at the top of the head of the 30S subunit, it contacts several helices of the 16S rRNA. In the 70S ribosome it contacts the 23S rRNA (bridge B1a) and protein L5 of the 50S subunit (bridge B1b), connecting the 2 subunits; these bridges are implicated in subunit movement. Contacts the tRNAs in the A and P-sites. In Porphyromonas gingivalis (strain ATCC 33277 / DSM 20709 / CIP 103683 / JCM 12257 / NCTC 11834 / 2561), this protein is Small ribosomal subunit protein uS13.